An 882-amino-acid polypeptide reads, in one-letter code: Alanine--tRNA ligase (882 aa).

His-568, His-572, Cys-670, and His-674 together coordinate Zn(2+).

Belongs to the class-II aminoacyl-tRNA synthetase family. Zn(2+) is required as a cofactor.

It is found in the cytoplasm. It catalyses the reaction tRNA(Ala) + L-alanine + ATP = L-alanyl-tRNA(Ala) + AMP + diphosphate. Catalyzes the attachment of alanine to tRNA(Ala) in a two-step reaction: alanine is first activated by ATP to form Ala-AMP and then transferred to the acceptor end of tRNA(Ala). Also edits incorrectly charged Ser-tRNA(Ala) and Gly-tRNA(Ala) via its editing domain. The protein is Alanine--tRNA ligase of Lactobacillus gasseri (strain ATCC 33323 / DSM 20243 / BCRC 14619 / CIP 102991 / JCM 1131 / KCTC 3163 / NCIMB 11718 / NCTC 13722 / AM63).